The sequence spans 670 residues: Transketolase, plasmid (670 aa).

His32 lines the substrate pocket. Thiamine diphosphate-binding positions include His72 and 120-122 (GPL). Residue Asp161 participates in Mg(2+) binding. The thiamine diphosphate site is built by Gly162 and Asn191. Mg(2+) contacts are provided by Asn191 and Ile193. His267, Arg364, and Ser391 together coordinate substrate. Position 267 (His267) interacts with thiamine diphosphate. Catalysis depends on Glu417, which acts as the Proton donor. Phe443 is a binding site for thiamine diphosphate. Residues His467, Asp475, and Arg526 each contribute to the substrate site.

Belongs to the transketolase family. Homodimer. Requires Mg(2+) as cofactor. Ca(2+) serves as cofactor. Mn(2+) is required as a cofactor. It depends on Co(2+) as a cofactor. The cofactor is thiamine diphosphate.

The enzyme catalyses D-sedoheptulose 7-phosphate + D-glyceraldehyde 3-phosphate = aldehydo-D-ribose 5-phosphate + D-xylulose 5-phosphate. The protein operates within carbohydrate biosynthesis; Calvin cycle. Functionally, catalyzes the transfer of a two-carbon ketol group from a ketose donor to an aldose acceptor, via a covalent intermediate with the cofactor thiamine pyrophosphate. The protein is Transketolase, plasmid (cbbTP) of Cupriavidus necator (strain ATCC 17699 / DSM 428 / KCTC 22496 / NCIMB 10442 / H16 / Stanier 337) (Ralstonia eutropha).